We begin with the raw amino-acid sequence, 394 residues long: 1-deoxy-D-xylulose 5-phosphate reductoisomerase (394 aa).

NADPH is bound by residues Thr10, Gly11, Ser12, Ile13, Asn38, and Asn125. Lys126 is a binding site for 1-deoxy-D-xylulose 5-phosphate. Glu127 serves as a coordination point for NADPH. Asp151 is a binding site for Mn(2+). 1-deoxy-D-xylulose 5-phosphate is bound by residues Ser152, Glu153, Ser182, and His205. Glu153 is a binding site for Mn(2+). Gly211 provides a ligand contact to NADPH. Residues Ser218, Asn223, Lys224, and Glu227 each coordinate 1-deoxy-D-xylulose 5-phosphate. Residue Glu227 participates in Mn(2+) binding.

Belongs to the DXR family. It depends on Mg(2+) as a cofactor. The cofactor is Mn(2+).

The enzyme catalyses 2-C-methyl-D-erythritol 4-phosphate + NADP(+) = 1-deoxy-D-xylulose 5-phosphate + NADPH + H(+). It participates in isoprenoid biosynthesis; isopentenyl diphosphate biosynthesis via DXP pathway; isopentenyl diphosphate from 1-deoxy-D-xylulose 5-phosphate: step 1/6. In terms of biological role, catalyzes the NADPH-dependent rearrangement and reduction of 1-deoxy-D-xylulose-5-phosphate (DXP) to 2-C-methyl-D-erythritol 4-phosphate (MEP). The chain is 1-deoxy-D-xylulose 5-phosphate reductoisomerase from Methylococcus capsulatus (strain ATCC 33009 / NCIMB 11132 / Bath).